An 867-amino-acid chain; its full sequence is Leucine--tRNA ligase (867 aa).

The 'HIGH' region signature appears at 43–53; that stretch reads PYPSGRLHMGH. The 'KMSKS' region signature appears at 627–631; it reads KMSKS. Residue Lys630 coordinates ATP.

It belongs to the class-I aminoacyl-tRNA synthetase family.

Its subcellular location is the cytoplasm. The catalysed reaction is tRNA(Leu) + L-leucine + ATP = L-leucyl-tRNA(Leu) + AMP + diphosphate. In Phenylobacterium zucineum (strain HLK1), this protein is Leucine--tRNA ligase.